A 203-amino-acid chain; its full sequence is ATP-dependent Clp protease proteolytic subunit (203 aa).

The active-site Nucleophile is the Ser-107. Residue His-132 is part of the active site.

This sequence belongs to the peptidase S14 family. Fourteen ClpP subunits assemble into 2 heptameric rings which stack back to back to give a disk-like structure with a central cavity, resembling the structure of eukaryotic proteasomes.

The protein resides in the cytoplasm. The catalysed reaction is Hydrolysis of proteins to small peptides in the presence of ATP and magnesium. alpha-casein is the usual test substrate. In the absence of ATP, only oligopeptides shorter than five residues are hydrolyzed (such as succinyl-Leu-Tyr-|-NHMec, and Leu-Tyr-Leu-|-Tyr-Trp, in which cleavage of the -Tyr-|-Leu- and -Tyr-|-Trp bonds also occurs).. Functionally, cleaves peptides in various proteins in a process that requires ATP hydrolysis. Has a chymotrypsin-like activity. Plays a major role in the degradation of misfolded proteins. In Shewanella woodyi (strain ATCC 51908 / MS32), this protein is ATP-dependent Clp protease proteolytic subunit.